The sequence spans 2171 residues: Mediator of DNA damage checkpoint protein 1 (2171 aa).

Acidic residues predominate over residues 1–19; sequence MEDTQAIDWDVEEEEETEQ. Residues 1–22 form a disordered region; that stretch reads MEDTQAIDWDVEEEEETEQSSE. Residues 1–150 are interaction with CHEK2; sequence MEDTQAIDWD…SRGPLTVEET (150 aa). The interaction with the MRN complex stretch occupies residues 2–220; sequence EDTQAIDWDV…PFAFNLNSDT (219 aa). Residue Thr4 is modified to Phosphothreonine. The FHA domain maps to 54–105; that stretch reads NVVGRMPDCSVALPFPSISKQHAEIEILAWDKAPILRDCGSLNGTQILRPPK. At Ser108 the chain carries Phosphoserine. The segment at 145–568 is required for nuclear localization (NLS1); the sequence is LTVEETPRVQ…PAKLLVVSLE (424 aa). Thr146 bears the Phosphothreonine mark. A phosphoserine mark is found at Ser168, Ser176, Ser196, and Ser218. Disordered regions lie at residues 185 to 248 and 261 to 317; these read RTTS…AKQS and DQPL…AEVH. Thr220 is modified (phosphothreonine). Residues 261 to 278 show a composition bias toward basic and acidic residues; it reads DQPLVKERDDDTKVKRGA. Ser299 is modified (phosphoserine). Thr301 carries the post-translational modification Phosphothreonine. Basic and acidic residues predominate over residues 306–317; that stretch reads DSRPPGRPAEVH. Residue Ser329 is modified to Phosphoserine. Thr331 is modified (phosphothreonine). A disordered region spans residues 355-387; sequence GVGTRGPGAPGLAHLQESQAGSDTDVEEGKAPQ. Phosphoserine occurs at positions 372 and 376. Phosphothreonine is present on Thr378. Phosphoserine occurs at positions 394, 397, and 402. The residue at position 404 (Thr404) is a Phosphothreonine. Phosphoserine is present on Ser411. Disordered stretches follow at residues 443–469 and 481–522; these read QRSQTTTERDSDTDVEEEELPVENREA and VRAH…VDIN. Phosphothreonine is present on Thr449. Ser453 carries the post-translational modification Phosphoserine. Residue Thr455 is modified to Phosphothreonine. Ser485, Ser495, Ser498, Ser504, Ser505, and Ser513 each carry phosphoserine. Residues 513–522 show a composition bias toward polar residues; it reads SQASTTVDIN. Thr523 is modified (phosphothreonine). Ser590 is subject to Phosphoserine. Lys616 is covalently cross-linked (Glycyl lysine isopeptide (Lys-Gly) (interchain with G-Cter in SUMO1); alternate). Lys616 participates in a covalent cross-link: Glycyl lysine isopeptide (Lys-Gly) (interchain with G-Cter in SUMO2); alternate. 2 disordered regions span residues 653 to 689 and 780 to 1969; these read DTLGESTQPQREGAQVPTGREREQHVGGTKDSEDNYG and SPPR…TKLN. The span at 671–685 shows a compositional bias: basic and acidic residues; that stretch reads GREREQHVGGTKDSE. A phosphoserine mark is found at Ser780 and Ser793. Lys812 is modified (N6-acetyllysine). Basic and acidic residues-rich tracts occupy residues 819–844, 851–862, 868–905, and 914–951; these read ETAERVGPERGPLERETEKLLPERQT, ELTKGKQDREQK, DTQRQESDKNGESASPERDRESLKVEIETSEEIQEKQV, and AFEREVERPVANRECDPAELEEKVPKVILERDTQRGEP. Phosphoserine is present on residues Ser955 and Ser998. Positions 955–964 are enriched in polar residues; sequence SQDQKGQASS. Residues 1016–1031 show a composition bias toward basic and acidic residues; sequence KASRIRAAEKVSRGDQ. Phosphoserine is present on Ser1033. The segment covering 1040–1051 has biased composition (pro residues); it reads PTVPEAPAPPQK. 2 positions are modified to phosphoserine: Ser1068 and Ser1086. The segment covering 1103–1113 has biased composition (basic residues); the sequence is PKPKIRTRKSS. Polar residues-rich tracts occupy residues 1129–1157 and 1170–1187; these read PSTSTAQPVTPKPTSQATRSRTNRSSVKT and PCTSTDQPVTSEPTSQVT. Residues 1148-1692 are interaction with the PRKDC complex; sequence SRTNRSSVKT…TNRSSVKTPE (545 aa). Thr1157 carries the phosphothreonine modification. Thr1198 is modified (phosphothreonine). The span at 1210-1227 shows a compositional bias: polar residues; that stretch reads QPSTSTDRPVTSEPTSHA. Ser1235 bears the Phosphoserine mark. A Phosphothreonine modification is found at Thr1239. Polar residues predominate over residues 1251 to 1268; sequence QPSTSTDQPVTSEPTYQA. Residues Thr1280 and Thr1302 each carry the phosphothreonine modification. Over residues 1306 to 1318 the composition is skewed to low complexity; that stretch reads TSRTTRSRTNMSS. Composition is skewed to polar residues over residues 1334–1350 and 1375–1403; these read PSTSTEQPVTPEPTSRA and PSTSTDQPVTPEPTSQATRGRTNRSSVKT. The span at 1429 to 1441 shows a compositional bias: low complexity; it reads TSRTTRSRTNMSS. A compositionally biased stretch (polar residues) spans 1457–1473; sequence PSTSTEQPVTPEPTSRA. Phosphoserine occurs at positions 1481 and 1482. Lys1484 carries the N6-acetyllysine modification. Thr1485 carries the post-translational modification Phosphothreonine. Residue Lys1495 forms a Glycyl lysine isopeptide (Lys-Gly) (interchain with G-Cter in SUMO1); alternate linkage. Residue Lys1495 forms a Glycyl lysine isopeptide (Lys-Gly) (interchain with G-Cter in SUMO2); alternate linkage. Polar residues-rich tracts occupy residues 1498–1526, 1538–1557, and 1580–1596; these read PSTSTDQPVTPEPTSQATRGRTNRSSVKT, QPSTSTDQPVTPEPTSQVTR, and ASASTDQPVTSEPTSRT. A phosphothreonine mark is found at Thr1507 and Thr1548. Residues Thr1615 and Thr1630 each carry the phosphothreonine modification. 2 stretches are compositionally biased toward polar residues: residues 1620–1649 and 1661–1678; these read QPSTSTDQPVTPEPTSQATRGRTNRSSVKT and QPSTSRNQLVTPEPTSRA. Ser1646 is modified (phosphoserine). Phosphothreonine is present on residues Thr1649 and Thr1671. Position 1686 is a phosphoserine (Ser1686). Thr1690 is modified (phosphothreonine). The segment covering 1693 to 1702 has biased composition (pro residues); sequence PVVPTAPEPH. A compositionally biased stretch (polar residues) spans 1706-1718; that stretch reads STDQPVTPKLTSR. Phosphothreonine occurs at positions 1712, 1746, and 1753. The segment covering 1760-1771 has biased composition (polar residues); the sequence is GGQSKTLRSSTV. Ser1763 is subject to Phosphoserine. At Thr1779 the chain carries Phosphothreonine. The span at 1780 to 1801 shows a compositional bias: polar residues; that stretch reads PEFQSPVTTDQPISPEPITQPS. A required for nuclear localization (NLS2) region spans residues 1780–2171; it reads PEFQSPVTTD…VLSPLEMSST (392 aa). Phosphoserine occurs at positions 1784 and 1793. A Glycyl lysine isopeptide (Lys-Gly) (interchain with G-Cter in SUMO2) cross-link involves residue Lys1822. Ser1857 is modified (phosphoserine). A Glycyl lysine isopeptide (Lys-Gly) (interchain with G-Cter in SUMO2) cross-link involves residue Lys1872. Thr1882 bears the Phosphothreonine mark. Ser1902 carries the post-translational modification Phosphoserine. Polar residues predominate over residues 1905 to 1918; sequence HQKQPQRGEVSQKT. A Glycyl lysine isopeptide (Lys-Gly) (interchain with G-Cter in SUMO1); alternate cross-link involves residue Lys1922. Lys1922 is covalently cross-linked (Glycyl lysine isopeptide (Lys-Gly) (interchain with G-Cter in SUMO2); alternate). The span at 1929-1939 shows a compositional bias: basic and acidic residues; it reads AEKPGKEEDVV. Thr1940 bears the Phosphothreonine mark. BRCT domains lie at 1974-2052 and 2073-2164; these read APKV…EYVV and RERR…FVLS. Arg2025 carries the omega-N-methylarginine modification.

In terms of assembly, homodimer. Interacts with H2AX, which requires phosphorylation of H2AX on 'Ser-139'. Interacts with the MRN complex, composed of MRE11, RAD50, and NBN. Interacts with CHEK2, which requires ATM-mediated phosphorylation of 'Thr-68' within the FHA domain of CHEK2. Interacts constitutively with the BRCA1-BARD1 complex, SMC1A and TP53BP1. Interacts with ATM and FANCD2, and these interactions are reduced upon DNA damage. Also interacts with the PRKDC complex, composed of XRCC6/KU70, XRCC5/KU80 and PRKDC/XRCC7. This interaction may be required for PRKDC autophosphorylation, which is essential for DNA double strand break (DSB) repair. When phosphorylated by ATM, interacts with RNF8 (via FHA domain). Interacts with CEP164. When phosphorylated, interacts with APTX (via FHA-like domain). Interacts (when phosphorylated) with TOPBP1; promoting TOPBP1 localization to DNA damage sites during mitosis. Interacts (when phosphorylated) with NBN; promoting NBN and MRN complex localization to DNA damage sites. Post-translationally, phosphorylated upon exposure to ionizing radiation (IR), ultraviolet radiation (UV), and hydroxyurea (HU). Phosphorylation in response to IR requires ATM, NBN, and possibly CHEK2. Also phosphorylated during the G2/M phase of the cell cycle and during activation of the mitotic spindle checkpoint. Phosphorylation at Thr-4 by ATM stabilizes and enhances homodimerization via the FHA domain. Phosphorylated at Ser-168 and Ser-196 by CK2 in response to DNA damage during mitosis, promoting interaction with TOPBP1. Phosphorylated by CK2 in response to DNA damage, promoting interaction with NBN and recruitment of the MRN complex to DNA damage sites. Sumoylation at Lys-1922 by PIAS4 following DNA damage promotes ubiquitin-mediated degradation. In terms of processing, ubiquitinated by RNF4, leading to proteasomal degradation; undergoes 'Lys-48'-linked polyubiquitination.

It is found in the nucleus. It localises to the chromosome. In terms of biological role, histone reader protein required for checkpoint-mediated cell cycle arrest in response to DNA damage within both the S phase and G2/M phases of the cell cycle. Specifically recognizes and binds histone H2AX phosphorylated at 'Ser-139', a marker of DNA damage, serving as a scaffold for the recruitment of DNA repair and signal transduction proteins to discrete foci of DNA damage sites. Also required for downstream events subsequent to the recruitment of these proteins. These include phosphorylation and activation of the ATM, CHEK1 and CHEK2 kinases, and stabilization of TP53/p53 and apoptosis. ATM and CHEK2 may also be activated independently by a parallel pathway mediated by TP53BP1. Required for chromosomal stability during mitosis by promoting recruitment of TOPBP1 to DNA double strand breaks (DSBs): TOPBP1 forms filamentous assemblies that bridge MDC1 and tether broken chromosomes during mitosis. Required for the repair of DSBs via homologous recombination by promoting recruitment of NBN component of the MRN complex to DSBs. The sequence is that of Mediator of DNA damage checkpoint protein 1 (MDC1) from Pan troglodytes (Chimpanzee).